A 216-amino-acid chain; its full sequence is Large ribosomal subunit protein uL24m (216 aa).

Residues 1–9 (MRLSALLAL) constitute a mitochondrion transit peptide. Ser24 carries the phosphoserine modification. A KOW domain is found at 56–89 (LFCGDTVEILEGKDAGKQGKVVQVIRQRNWVVVG).

This sequence belongs to the universal ribosomal protein uL24 family. In terms of assembly, component of the mitochondrial large ribosomal subunit (mt-LSU). Mature mammalian 55S mitochondrial ribosomes consist of a small (28S) and a large (39S) subunit. The 28S small subunit contains a 12S ribosomal RNA (12S mt-rRNA) and 30 different proteins. The 39S large subunit contains a 16S rRNA (16S mt-rRNA), a copy of mitochondrial valine transfer RNA (mt-tRNA(Val)), which plays an integral structural role, and 52 different proteins.

It is found in the mitochondrion. This is Large ribosomal subunit protein uL24m (MRPL24) from Homo sapiens (Human).